We begin with the raw amino-acid sequence, 135 residues long: MRDMQDDDTKSPAPPPAAAAAARRAAGQAAPDASALRDRFAKLAQADTPEAATDAAAAADDEVTRIRALIDEMRPTFRRDGGDIELVRVEGAKVIVHLSGACAGCMLAGQTLYGVQKRITDVLGRPFRVIPDIRH.

The segment covering 1 to 10 (MRDMQDDDTK) has biased composition (basic and acidic residues). The interval 1 to 29 (MRDMQDDDTKSPAPPPAAAAAARRAAGQA) is disordered. Positions 18–29 (AAAAARRAAGQA) are enriched in low complexity.

It belongs to the NifU family.

May be involved in the formation or repair of [Fe-S] clusters present in iron-sulfur proteins. This is Nitrogen fixation protein NifU 1 (nifU1) from Rhodobacter capsulatus (Rhodopseudomonas capsulata).